Here is a 70-residue protein sequence, read N- to C-terminus: Biotin carboxyl carrier protein of acetyl-CoA carboxylase (70 aa).

Residues 1–69 (GTVVAPMVGL…QDGIKLFALK (69 aa)) form the Biotinyl-binding domain. Lys-35 carries the N6-biotinyllysine modification.

The protein resides in the plastid. It localises to the chloroplast. The protein operates within lipid metabolism; fatty acid biosynthesis. In terms of biological role, this protein is a component of the acetyl coenzyme A carboxylase complex; first, biotin carboxylase catalyzes the carboxylation of the carrier protein and then the transcarboxylase transfers the carboxyl group to form malonyl-CoA. The sequence is that of Biotin carboxyl carrier protein of acetyl-CoA carboxylase from Solanum lycopersicum (Tomato).